A 1080-amino-acid chain; its full sequence is Carbamoyl phosphate synthase large chain (1080 aa).

The carboxyphosphate synthetic domain stretch occupies residues 1–403 (MPKRTDLRTI…SLQKAVRGLE (403 aa)). 12 residues coordinate ATP: arginine 129, arginine 169, glycine 175, glycine 176, glutamate 208, valine 210, glutamate 215, glycine 241, valine 242, histidine 243, glutamine 285, and glutamate 299. The 196-residue stretch at 133-328 (RVAMQEIGLE…IAKIAAKLAV (196 aa)) folds into the ATP-grasp 1 domain. Positions 285, 299, and 301 each coordinate Mg(2+). 3 residues coordinate Mn(2+): glutamine 285, glutamate 299, and asparagine 301. The tract at residues 404 to 554 (TGKVGLEPTG…YSTYEEECEA (151 aa)) is oligomerization domain. The carbamoyl phosphate synthetic domain stretch occupies residues 555-942 (APSDRRKIMI…AFARAQEAGD (388 aa)). One can recognise an ATP-grasp 2 domain in the interval 679 to 876 (QKLVQQLGLR…LAKIAARCMT (198 aa)). 10 residues coordinate ATP: arginine 715, arginine 754, leucine 756, glutamate 761, glycine 787, valine 788, histidine 789, serine 790, glutamine 830, and glutamate 847. Mg(2+)-binding residues include glutamine 830, glutamate 847, and asparagine 849. Residues glutamine 830, glutamate 847, and asparagine 849 each contribute to the Mn(2+) site. One can recognise an MGS-like domain in the interval 943–1080 (IRAPQPGRAF…LQELHKELQV (138 aa)). The allosteric domain stretch occupies residues 943–1080 (IRAPQPGRAF…LQELHKELQV (138 aa)).

The protein belongs to the CarB family. Composed of two chains; the small (or glutamine) chain promotes the hydrolysis of glutamine to ammonia, which is used by the large (or ammonia) chain to synthesize carbamoyl phosphate. Tetramer of heterodimers (alpha,beta)4. The cofactor is Mg(2+). It depends on Mn(2+) as a cofactor.

It catalyses the reaction hydrogencarbonate + L-glutamine + 2 ATP + H2O = carbamoyl phosphate + L-glutamate + 2 ADP + phosphate + 2 H(+). It carries out the reaction hydrogencarbonate + NH4(+) + 2 ATP = carbamoyl phosphate + 2 ADP + phosphate + 2 H(+). It participates in amino-acid biosynthesis; L-arginine biosynthesis; carbamoyl phosphate from bicarbonate: step 1/1. It functions in the pathway pyrimidine metabolism; UMP biosynthesis via de novo pathway; (S)-dihydroorotate from bicarbonate: step 1/3. In terms of biological role, large subunit of the glutamine-dependent carbamoyl phosphate synthetase (CPSase). CPSase catalyzes the formation of carbamoyl phosphate from the ammonia moiety of glutamine, carbonate, and phosphate donated by ATP, constituting the first step of 2 biosynthetic pathways, one leading to arginine and/or urea and the other to pyrimidine nucleotides. The large subunit (synthetase) binds the substrates ammonia (free or transferred from glutamine from the small subunit), hydrogencarbonate and ATP and carries out an ATP-coupled ligase reaction, activating hydrogencarbonate by forming carboxy phosphate which reacts with ammonia to form carbamoyl phosphate. This is Carbamoyl phosphate synthase large chain from Xylella fastidiosa (strain 9a5c).